The sequence spans 102 residues: NAD(P)H-quinone oxidoreductase subunit 4L (102 aa).

3 consecutive transmembrane segments (helical) span residues 4-24, 33-53, and 65-85; these read LQFF…GLIV, MSIE…SNFV, and VFVI…VLGI.

It belongs to the complex I subunit 4L family. NDH-1 can be composed of about 15 different subunits; different subcomplexes with different compositions have been identified which probably have different functions.

The protein resides in the cellular thylakoid membrane. It carries out the reaction a plastoquinone + NADH + (n+1) H(+)(in) = a plastoquinol + NAD(+) + n H(+)(out). It catalyses the reaction a plastoquinone + NADPH + (n+1) H(+)(in) = a plastoquinol + NADP(+) + n H(+)(out). In terms of biological role, NDH-1 shuttles electrons from an unknown electron donor, via FMN and iron-sulfur (Fe-S) centers, to quinones in the respiratory and/or the photosynthetic chain. The immediate electron acceptor for the enzyme in this species is believed to be plastoquinone. Couples the redox reaction to proton translocation, and thus conserves the redox energy in a proton gradient. Cyanobacterial NDH-1 also plays a role in inorganic carbon-concentration. In Synechococcus sp. (strain JA-3-3Ab) (Cyanobacteria bacterium Yellowstone A-Prime), this protein is NAD(P)H-quinone oxidoreductase subunit 4L.